The chain runs to 443 residues: UDP-N-acetylmuramoylalanine--D-glutamate ligase (443 aa).

116 to 122 lines the ATP pocket; the sequence is GTNGKST.

Belongs to the MurCDEF family.

Its subcellular location is the cytoplasm. The enzyme catalyses UDP-N-acetyl-alpha-D-muramoyl-L-alanine + D-glutamate + ATP = UDP-N-acetyl-alpha-D-muramoyl-L-alanyl-D-glutamate + ADP + phosphate + H(+). It functions in the pathway cell wall biogenesis; peptidoglycan biosynthesis. Functionally, cell wall formation. Catalyzes the addition of glutamate to the nucleotide precursor UDP-N-acetylmuramoyl-L-alanine (UMA). This is UDP-N-acetylmuramoylalanine--D-glutamate ligase from Novosphingobium aromaticivorans (strain ATCC 700278 / DSM 12444 / CCUG 56034 / CIP 105152 / NBRC 16084 / F199).